We begin with the raw amino-acid sequence, 312 residues long: Acetyl-coenzyme A carboxylase carboxyl transferase subunit alpha (312 aa).

The region spanning 36–286 is the CoA carboxyltransferase C-terminal domain; it reads NLEKEISKTY…ADYVKKSLNE (251 aa).

The protein belongs to the AccA family. Acetyl-CoA carboxylase is a heterohexamer composed of biotin carboxyl carrier protein (AccB), biotin carboxylase (AccC) and two subunits each of ACCase subunit alpha (AccA) and ACCase subunit beta (AccD).

The protein resides in the cytoplasm. It catalyses the reaction N(6)-carboxybiotinyl-L-lysyl-[protein] + acetyl-CoA = N(6)-biotinyl-L-lysyl-[protein] + malonyl-CoA. It participates in lipid metabolism; malonyl-CoA biosynthesis; malonyl-CoA from acetyl-CoA: step 1/1. In terms of biological role, component of the acetyl coenzyme A carboxylase (ACC) complex. First, biotin carboxylase catalyzes the carboxylation of biotin on its carrier protein (BCCP) and then the CO(2) group is transferred by the carboxyltransferase to acetyl-CoA to form malonyl-CoA. This is Acetyl-coenzyme A carboxylase carboxyl transferase subunit alpha from Campylobacter jejuni (strain RM1221).